We begin with the raw amino-acid sequence, 320 residues long: 3-ketodihydrosphingosine reductase TSC10 (320 aa).

The Cytoplasmic segment spans residues 1–254 (MKFTLEDQVV…IIAKSLARGD (254 aa)). Leucine 11 is an NADP(+) binding site. The NADPH site is built by glycine 14, serine 16, and glycine 18. Positions 14 to 18 (GGSQG) match the GXSXG motif. Leucine 19 contributes to the NADP(+) binding site. NADPH contacts are provided by arginine 41, arginine 45, aspartate 89, and leucine 90. Residue aspartate 89 participates in NADP(+) binding. The Proton donor role is filled by serine 166. NADP(+)-binding residues include tyrosine 180, lysine 184, and serine 213. The active-site Proton acceptor is tyrosine 180. The Lowers pKa of active site Tyr role is filled by lysine 184. A helical transmembrane segment spans residues 255 to 275 (DDVFTDFVGWMIMGMDLGLTA). Topologically, residues 276-279 (KKSR) are lumenal. A helical membrane pass occupies residues 280–300 (FVPLQWIFGVLSNILVVPFYM). Over 301 to 320 (VGCSWYIRKWFRENDGKKAN) the chain is Cytoplasmic.

This sequence belongs to the short-chain dehydrogenases/reductases (SDR) family. In terms of assembly, dimer or tetramer.

It is found in the endoplasmic reticulum membrane. It carries out the reaction sphinganine + NADP(+) = 3-oxosphinganine + NADPH + H(+). The protein operates within lipid metabolism; sphingolipid metabolism. Functionally, catalyzes the reduction of 3'-oxosphinganine (3-ketodihydrosphingosine/KDS) to sphinganine (dihydrosphingosine/DHS), the second step of de novo sphingolipid biosynthesis. This chain is 3-ketodihydrosphingosine reductase TSC10, found in Saccharomyces cerevisiae (strain ATCC 204508 / S288c) (Baker's yeast).